The following is a 413-amino-acid chain: Arginine biosynthesis bifunctional protein ArgJ (413 aa).

Residues Thr160, Lys186, Thr197, Glu277, Asn408, and Thr413 each coordinate substrate. Thr197 (nucleophile) is an active-site residue.

This sequence belongs to the ArgJ family. In terms of assembly, heterotetramer of two alpha and two beta chains.

The protein resides in the cytoplasm. The enzyme catalyses N(2)-acetyl-L-ornithine + L-glutamate = N-acetyl-L-glutamate + L-ornithine. It catalyses the reaction L-glutamate + acetyl-CoA = N-acetyl-L-glutamate + CoA + H(+). It participates in amino-acid biosynthesis; L-arginine biosynthesis; L-ornithine and N-acetyl-L-glutamate from L-glutamate and N(2)-acetyl-L-ornithine (cyclic): step 1/1. Its pathway is amino-acid biosynthesis; L-arginine biosynthesis; N(2)-acetyl-L-ornithine from L-glutamate: step 1/4. Its function is as follows. Catalyzes two activities which are involved in the cyclic version of arginine biosynthesis: the synthesis of N-acetylglutamate from glutamate and acetyl-CoA as the acetyl donor, and of ornithine by transacetylation between N(2)-acetylornithine and glutamate. The sequence is that of Arginine biosynthesis bifunctional protein ArgJ from Prochlorococcus marinus (strain SARG / CCMP1375 / SS120).